A 104-amino-acid chain; its full sequence is Vegetative-specific protein H7 (104 aa).

The 55-residue stretch at 43–97 (IQRARNALKMTQKELAFKINERPGVINEYESGSAIPSQAVLSKLEKALNVKLRGK) folds into the HTH cro/C1-type domain. The H-T-H motif DNA-binding region spans 54–73 (QKELAFKINERPGVINEYES).

This chain is Vegetative-specific protein H7 (cinD-1), found in Dictyostelium discoideum (Social amoeba).